Here is a 984-residue protein sequence, read N- to C-terminus: Putative formate dehydrogenase SH0748 (984 aa).

Positions 3-79 (EHLIVTLDGT…PMTVNTQNND (77 aa)) constitute a 2Fe-2S ferredoxin-type domain. Cys37, Cys48, Cys51, and Cys63 together coordinate [2Fe-2S] cluster. In terms of domain architecture, 4Fe-4S His(Cys)3-ligated-type spans 79-119 (DVKASQKEALDRILEKHMLYCTVCDYNNGDCEIHNAMDAWG). The [4Fe-4S] cluster site is built by His95, Cys99, Cys102, Cys109, Cys147, Cys150, Cys153, Cys157, Cys190, Cys193, Cys196, Cys200, Cys264, Cys267, Cys271, and Cys299. 2 consecutive 4Fe-4S ferredoxin-type domains span residues 138 to 165 (PFYRYDPDQCILCGRCVEACQDIEVNET) and 181 to 211 (NDVPINESSCVSCGQCATVCPCNAMMEVNME). A formate dehydrogenase region spans residues 252–984 (MRKERIKKTK…YVFPGNVVDK (733 aa)). The 4Fe-4S Mo/W bis-MGD-type domain occupies 257 to 313 (IKKTKTVCTYCGVGCSFDVWTKDREVLKVQPSHDSPANKIATCVKGKFSWGHINSDQ).

This sequence in the C-terminal section; belongs to the prokaryotic molybdopterin-containing oxidoreductase family. The cofactor is [2Fe-2S] cluster. [4Fe-4S] cluster is required as a cofactor. It depends on Mo-bis(molybdopterin guanine dinucleotide) as a cofactor.

It carries out the reaction formate + NAD(+) = CO2 + NADH. The protein is Putative formate dehydrogenase SH0748 of Staphylococcus haemolyticus (strain JCSC1435).